The following is a 628-amino-acid chain: MNENRTFATPDAVPVRAVVLAAGLGSRLGEPSSRRPKPLTPVAGRPILAHTLGHLAGVGVQEVVLVVGHLREAVRELAGGEYAGMKIHYVVNPDPSTTNNLRSVRLAREFLDQDVFLLEGDVVFEPAVLERLAAAPEASAVAASRPLRPLAGTVVRADADGVLTDYVDDRRQAGAFDHPGALKTANLYLLREAFLRERFLPALEELDRRLAGQGYYDYAVSDGLAAGGHAWRVADISDLAWYEVDDPGDQRQADFRFSPPREQQRILESLHGGYWRYGVTDHALLYNVHFPPAEMMEILRSDFDAVLRNYPSAHAPLTELAATIAARRPEEVVLANGSSEIIKILARLRGNWTVPVPGFNEYENVVGAERVHRYQLDAPDFRLPVEDYAAFVRRSGVDTAVVVSPNNPTSVGVPLADLRRLADLVGPDVLLVIDESFVDFAPAPIASIGPFLDRHRNVLLLKSISKVYGVGGIRLGYAATADTELARTLRAELPIWDINGFAEEFLRVLPHFRRAFADSCRQMRQNTLALAEGLAALPGIRVVPPDANFVFVELTGGIRAPELAHELFRRFRILTKECSGKSMPGGDAYLRVSSRSRAENEVVVAAVAEIVGGPRGAATTEGAGRADG.

The segment at 1 to 255 (MNENRTFATP…DPGDQRQADF (255 aa)) is mobA-like NTP transferase. A decarboxylase region spans residues 278 to 628 (GVTDHALLYN…TTEGAGRADG (351 aa)). Lysine 466 is modified (N6-(pyridoxal phosphate)lysine).

This sequence in the N-terminal section; belongs to the MobA family. The protein in the C-terminal section; belongs to the class-I pyridoxal-phosphate-dependent aminotransferase family. Mg(2+) serves as cofactor. It depends on pyridoxal 5'-phosphate as a cofactor.

The catalysed reaction is 2-amino-4-phosphonobutanoate + CTP = CMP-5'-(3-amino-3-carboxypropyl)phosphonate + diphosphate. The enzyme catalyses CMP-5'-(3-amino-3-carboxypropyl)phosphonate + H(+) = CMP-5'-(3-aminopropyl)phosphonate + CO2. It participates in antibiotic biosynthesis. In terms of biological role, bifunctional cytidylyltransferase/decarboxylase involved in the biosynthesis of the phosphonate antibiotic FR-900098, a potent antimalarial agent that acts as an inhibitor of 1-deoxy-D-xylulose 5-phosphate reductoisomerase (DXR), the first enzyme in the nonmevalonate pathway for isoprenoid biosynthesis. Catalyzes the condensation of 2-amino-4-phosphonobutyrate (2APn) and CTP to form CMP-5'-2APn and then decarboxylates CMP-5'-2APn to yield CMP-5'-(3-aminopropyl)phosphonate (CMP-5'-3APn). This Streptomyces rubellomurinus (strain ATCC 31215) protein is CMP-5'-(3-aminopropyl)phosphonate synthase.